A 181-amino-acid polypeptide reads, in one-letter code: Probable inactive acireductone dioxygenase 2 (181 aa).

This sequence belongs to the acireductone dioxygenase (ARD) family.

Its subcellular location is the cytoplasm. It is found in the nucleus. Functionally, probable inactive acireductone dioxygenase. This is Probable inactive acireductone dioxygenase 2 from Sorghum bicolor (Sorghum).